We begin with the raw amino-acid sequence, 394 residues long: Elongation factor Tu (394 aa).

One can recognise a tr-type G domain in the interval 10–204; sequence KAHVNIGTIG…SVDSYIPTPT (195 aa). The interval 19–26 is G1; sequence GHIDHGKT. GTP is bound at residue 19–26; sequence GHIDHGKT. Position 26 (threonine 26) interacts with Mg(2+). The interval 60-64 is G2; that stretch reads GITIN. The segment at 81-84 is G3; it reads DCPG. Residues 81–85 and 136–139 each bind GTP; these read DCPGH and NKCD. The segment at 136–139 is G4; that stretch reads NKCD. The tract at residues 174–176 is G5; that stretch reads SAL.

This sequence belongs to the TRAFAC class translation factor GTPase superfamily. Classic translation factor GTPase family. EF-Tu/EF-1A subfamily. Monomer.

The protein localises to the cytoplasm. The catalysed reaction is GTP + H2O = GDP + phosphate + H(+). Its function is as follows. GTP hydrolase that promotes the GTP-dependent binding of aminoacyl-tRNA to the A-site of ribosomes during protein biosynthesis. The sequence is that of Elongation factor Tu from Malacoplasma penetrans (strain HF-2) (Mycoplasma penetrans).